Here is a 245-residue protein sequence, read N- to C-terminus: 8-amino-3,8-dideoxy-manno-octulosonate cytidylyltransferase (245 aa).

The protein belongs to the KdsB family.

The protein localises to the cytoplasm. The enzyme catalyses 8-amino-3,8-dideoxy-alpha-D-manno-octulosonate + CTP = CMP-8-amino-3,8-dideoxy-alpha-D-manno-oct-2-ulosonate + diphosphate. It participates in bacterial outer membrane biogenesis; lipopolysaccharide biosynthesis. Functionally, activates KDO8N (a required 8-carbon sugar) for incorporation into bacterial lipopolysaccharide in the Shewanella genus. The polypeptide is 8-amino-3,8-dideoxy-manno-octulosonate cytidylyltransferase (Shewanella baltica (strain OS195)).